We begin with the raw amino-acid sequence, 431 residues long: Ornithine decarboxylase (431 aa).

Residue lysine 94 is modified to N6-(pyridoxal phosphate)lysine. Pyridoxal 5'-phosphate contacts are provided by residues serine 226, glycine 264, and 297 to 300 (EPGR). Position 340 to 341 (340 to 341 (YD)) interacts with substrate. Cysteine 376 acts as the Proton donor; shared with dimeric partner in catalysis. Aspartate 377 serves as a coordination point for substrate. Tyrosine 405 contributes to the pyridoxal 5'-phosphate binding site.

It belongs to the Orn/Lys/Arg decarboxylase class-II family. In terms of assembly, homodimer. Only the dimer is catalytically active, as the active sites are constructed of residues from both monomers. It depends on pyridoxal 5'-phosphate as a cofactor.

The catalysed reaction is L-ornithine + H(+) = putrescine + CO2. It functions in the pathway amine and polyamine biosynthesis; putrescine biosynthesis via L-ornithine pathway; putrescine from L-ornithine: step 1/1. Its activity is regulated as follows. Inhibited by antizyme (AZ) in response to polyamine levels. AZ inhibits the assembly of the functional homodimer by binding to ODC monomers and targeting them for ubiquitin-independent proteolytic destruction by the 26S proteasome. Its function is as follows. Catalyzes the first and rate-limiting step of polyamine biosynthesis that converts ornithine into putrescine, which is the precursor for the polyamines, spermidine and spermine. Polyamines are essential for cell proliferation and are implicated in cellular processes, ranging from DNA replication to apoptosis. The polypeptide is Ornithine decarboxylase (Datura stramonium (Jimsonweed)).